The chain runs to 200 residues: Small ribosomal subunit protein uS4 (200 aa).

Residues 22 to 43 (TGKELERRPYAPGQHGPTQRKK) are disordered. The S4 RNA-binding domain maps to 92-170 (QRLDNIVYRL…VPEYVTFDAE (79 aa)).

The protein belongs to the universal ribosomal protein uS4 family. As to quaternary structure, part of the 30S ribosomal subunit. Contacts protein S5. The interaction surface between S4 and S5 is involved in control of translational fidelity.

In terms of biological role, one of the primary rRNA binding proteins, it binds directly to 16S rRNA where it nucleates assembly of the body of the 30S subunit. With S5 and S12 plays an important role in translational accuracy. The polypeptide is Small ribosomal subunit protein uS4 (Listeria innocua serovar 6a (strain ATCC BAA-680 / CLIP 11262)).